The chain runs to 170 residues: Putative 3-methyladenine DNA glycosylase (170 aa).

The protein belongs to the DNA glycosylase MPG family.

The sequence is that of Putative 3-methyladenine DNA glycosylase from Sodalis glossinidius.